Consider the following 248-residue polypeptide: Glutathione S-transferase omega-2 (248 aa).

The 80-residue stretch at 22-101 (GVIRIYSMRF…YLDDVFPGRK (80 aa)) folds into the GST N-terminal domain. Cys32 serves as the catalytic Nucleophile. Residues Lys59, Val72, and 85-86 (ES) each bind glutathione. Positions 106–231 (DPYERARQKM…IFLGFLNLYF (126 aa)) constitute a GST C-terminal domain.

The protein belongs to the GST superfamily. Omega family.

The catalysed reaction is RX + glutathione = an S-substituted glutathione + a halide anion + H(+). It carries out the reaction L-dehydroascorbate + 2 glutathione = glutathione disulfide + L-ascorbate. It catalyses the reaction methylarsonate + 2 glutathione + H(+) = methylarsonous acid + glutathione disulfide + H2O. Functionally, exhibits glutathione-dependent thiol transferase activity. Has high dehydroascorbate reductase activity and may contribute to the recycling of ascorbic acid. Participates in the biotransformation of inorganic arsenic and reduces monomethylarsonic acid (MMA). In Rattus norvegicus (Rat), this protein is Glutathione S-transferase omega-2 (Gsto2).